The sequence spans 404 residues: Probable RNA polymerase sigma-C factor (404 aa).

Positions 193-206 (DLIQEGTLGLERAV) match the Polymerase core binding motif. The segment at residues 362-381 (LSEIGRILNLSRERVRQIEA) is a DNA-binding region (H-T-H motif).

It belongs to the sigma-70 factor family.

Its function is as follows. Sigma factors are initiation factors that promote the attachment of RNA polymerase to specific initiation sites and are then released. The protein is Probable RNA polymerase sigma-C factor (sigC) of Synechocystis sp. (strain ATCC 27184 / PCC 6803 / Kazusa).